The chain runs to 333 residues: MRYEVDKRRRIVRVTPERDEDLYFLYLLIDVGDVVRGWTVREYKPDGTKEGERVKMFLGIKVEALEYHKFRGSLRVRGPVVEVEEGIEGVKGRRHTFDIVAGREVEIEKGDEEALEAAEGVLEMAKGILPRILLVSVDDEEAAFAYVTALGVEVLYFLRNDARRGGEEGSLLDEFLAAVGKATENLRRRYNPDKVVLAGPHIILEHVARYVHGDRIPQSSGGLAGVYEFVRRGLYDAFKAEIGFSAYEKLLQLLATNSERVATGPKDVEEAASAGRIDALLVLDSFIKENPREVWAIISRAYKSRSKIFIIREDTEIGVGLRAMGGVAAILRW.

It belongs to the eukaryotic release factor 1 family. Pelota subfamily. Monomer. A divalent metal cation is required as a cofactor.

It is found in the cytoplasm. May function in recognizing stalled ribosomes, interact with stem-loop structures in stalled mRNA molecules, and effect endonucleolytic cleavage of the mRNA. May play a role in the release non-functional ribosomes and degradation of damaged mRNAs. Has endoribonuclease activity. In Pyrobaculum arsenaticum (strain DSM 13514 / JCM 11321 / PZ6), this protein is Protein pelota homolog.